A 398-amino-acid polypeptide reads, in one-letter code: Acetate kinase (398 aa).

Residue asparagine 7 coordinates Mg(2+). An ATP-binding site is contributed by lysine 14. Arginine 91 contributes to the substrate binding site. The Proton donor/acceptor role is filled by aspartate 148. Residues 208 to 212, 283 to 285, and 331 to 335 each bind ATP; these read HLGNG, DFR, and GIGEH. Mg(2+) is bound at residue glutamate 386.

It belongs to the acetokinase family. Homodimer. Mg(2+) is required as a cofactor. Mn(2+) serves as cofactor.

The protein resides in the cytoplasm. The enzyme catalyses acetate + ATP = acetyl phosphate + ADP. Its pathway is metabolic intermediate biosynthesis; acetyl-CoA biosynthesis; acetyl-CoA from acetate: step 1/2. In terms of biological role, catalyzes the formation of acetyl phosphate from acetate and ATP. Can also catalyze the reverse reaction. This Clostridium botulinum (strain Alaska E43 / Type E3) protein is Acetate kinase.